We begin with the raw amino-acid sequence, 114 residues long: Large ribosomal subunit protein uL22 (114 aa).

The protein belongs to the universal ribosomal protein uL22 family. As to quaternary structure, part of the 50S ribosomal subunit.

Functionally, this protein binds specifically to 23S rRNA; its binding is stimulated by other ribosomal proteins, e.g. L4, L17, and L20. It is important during the early stages of 50S assembly. It makes multiple contacts with different domains of the 23S rRNA in the assembled 50S subunit and ribosome. Its function is as follows. The globular domain of the protein is located near the polypeptide exit tunnel on the outside of the subunit, while an extended beta-hairpin is found that lines the wall of the exit tunnel in the center of the 70S ribosome. This is Large ribosomal subunit protein uL22 from Desulfosudis oleivorans (strain DSM 6200 / JCM 39069 / Hxd3) (Desulfococcus oleovorans).